A 249-amino-acid chain; its full sequence is MELGYVLTEGKTKIVYAHPTDPDLAILYHKDGITAGDGARRSVIEGKGELAGQTTANVFRLLNRAGIATHFVDAPEPRLTVVRRCRMIPLEVVMRRLPAGSYLRRHPEAAGQRFDPPLVEFFLKDDARHDPQIAPQEIIAQGIATPAEVEQMTDTGRKVFVTLEAAWQQLDVTLVDLKIEFGRTAQGDLLVADVIDNDSWRIWPSGDPAQMLDKQVYRNAQVVDEALLADVRARYALVAELTGRWGAGS.

Belongs to the SAICAR synthetase family.

It carries out the reaction 5-amino-1-(5-phospho-D-ribosyl)imidazole-4-carboxylate + L-aspartate + ATP = (2S)-2-[5-amino-1-(5-phospho-beta-D-ribosyl)imidazole-4-carboxamido]succinate + ADP + phosphate + 2 H(+). The protein operates within purine metabolism; IMP biosynthesis via de novo pathway; 5-amino-1-(5-phospho-D-ribosyl)imidazole-4-carboxamide from 5-amino-1-(5-phospho-D-ribosyl)imidazole-4-carboxylate: step 1/2. This Chloroflexus aurantiacus (strain ATCC 29366 / DSM 635 / J-10-fl) protein is Phosphoribosylaminoimidazole-succinocarboxamide synthase.